The primary structure comprises 171 residues: Ribosome maturation factor RimM (171 aa).

Residues 94-168 (NDEFYKDELI…MTIVPPEIVG (75 aa)) form the PRC barrel domain.

This sequence belongs to the RimM family. Binds ribosomal protein uS19.

The protein localises to the cytoplasm. In terms of biological role, an accessory protein needed during the final step in the assembly of 30S ribosomal subunit, possibly for assembly of the head region. Essential for efficient processing of 16S rRNA. May be needed both before and after RbfA during the maturation of 16S rRNA. It has affinity for free ribosomal 30S subunits but not for 70S ribosomes. The protein is Ribosome maturation factor RimM of Anaplasma phagocytophilum (strain HZ).